A 427-amino-acid chain; its full sequence is Pre-mRNA-splicing factor PRP46 (427 aa).

WD repeat units lie at residues 113 to 153 (GHHG…LKVT), 156 to 195 (AHDMTVRDLAISNRHPYMFSVSEDKTVKCWDLEKNTAIRN), 198 to 237 (GHLSGVHTVDIHPTVDVVVTAGRDSVVKVWDIRTRLPVMT), 240 to 281 (GHKG…KVLT), 283 to 322 (HQRTVRDISVHPSEFSFASACTNDIRSWLLPKGELLTNFV), 324 to 362 (QDLDVINTVSINQDDVLFAGSDNGSLTFFDYKSGHKYQT), and 373 to 412 (ESERGILSSTFDGTGLRLLTGETDRTIKIWKQDETASQDT). Residues 404 to 427 (QDETASQDTHPNLPWNPKLDSQRL) form a disordered region.

Belongs to the WD repeat PRL1/PRL2 family. Associated with the spliceosome.

It localises to the cytoplasm. The protein localises to the nucleus. Functionally, involved in pre-mRNA splicing and required for cell cycle progression at G2/M. The protein is Pre-mRNA-splicing factor PRP46 (PRP46) of Candida glabrata (strain ATCC 2001 / BCRC 20586 / JCM 3761 / NBRC 0622 / NRRL Y-65 / CBS 138) (Yeast).